Consider the following 613-residue polypeptide: Thymidine kinase (613 aa).

Disordered stretches follow at residues 1–233 and 253–276; these read MAEG…GVKS and SDGE…ATPR. The segment covering 8–18 has biased composition (low complexity); it reads FSSSSTSSEEA. The segment covering 78–88 has biased composition (basic and acidic residues); that stretch reads PKNEPRPERGK. Over residues 114–126 the composition is skewed to basic residues; the sequence is LGSRTRSKSRSRD. Positions 199-218 are enriched in basic and acidic residues; that stretch reads HRYDKPSYDEEVCQKKDKGG. 301–308 lines the ATP pocket; it reads GSMGVGKT. Glu-327 serves as the catalytic Proton acceptor. The substrate site is built by Tyr-344, Gln-365, and Arg-461.

The protein belongs to the herpesviridae thymidine kinase family. In terms of assembly, homodimer.

It catalyses the reaction thymidine + ATP = dTMP + ADP + H(+). Catalyzes the transfer of the gamma-phospho group of ATP to thymidine to generate dTMP in the salvage pathway of pyrimidine synthesis. The dTMP serves as a substrate for DNA polymerase during viral DNA replication. Allows the virus to be reactivated and to grow in non-proliferative cells lacking a high concentration of phosphorylated nucleic acid precursors. The polypeptide is Thymidine kinase (Equine herpesvirus 2 (strain 86/87) (EHV-2)).